The chain runs to 405 residues: Adenylosuccinate synthetase (405 aa).

Residues 12-18 and 40-42 contribute to the GTP site; these read GDEGKGK and GHT. Residue Asp-13 is the Proton acceptor of the active site. Positions 13 and 40 each coordinate Mg(2+). IMP contacts are provided by residues 13–16, 38–41, Thr-121, Arg-135, Gln-213, Thr-228, and Arg-297; these read DEGK and NAGH. His-41 (proton donor) is an active-site residue. 293–299 is a substrate binding site; it reads TTTGRAR. GTP-binding positions include Arg-299, 325 to 327, and 390 to 392; these read KMD and SAG.

Belongs to the adenylosuccinate synthetase family. In terms of assembly, homodimer. Mg(2+) serves as cofactor.

Its subcellular location is the cytoplasm. It catalyses the reaction IMP + L-aspartate + GTP = N(6)-(1,2-dicarboxyethyl)-AMP + GDP + phosphate + 2 H(+). The protein operates within purine metabolism; AMP biosynthesis via de novo pathway; AMP from IMP: step 1/2. Functionally, plays an important role in the de novo pathway of purine nucleotide biosynthesis. Catalyzes the first committed step in the biosynthesis of AMP from IMP. The sequence is that of Adenylosuccinate synthetase from Deinococcus deserti (strain DSM 17065 / CIP 109153 / LMG 22923 / VCD115).